A 295-amino-acid polypeptide reads, in one-letter code: MEVLDKAVNGYIDHLLGPKDPRVRGWLLLDNYVPTILFTALYLFIVWRGPKYMQNRPPVSCRGILVVYNLGLTLLSLYMFYELVTGVWEGGYNFFCQDTNSGGDADTKIVRVLWWYYFSKLIEFMDTFFFILRKNNHQITVLHVYHHASMLNIWWFVMNWVPCGHSYFGATLNSFIHVLMYSYYGLSAIPAMRPYLWWKKYITQCQLTQFVLTMTQTTCAMIWPCKFPMGWLYFQNCYMISLIILFGNFYIKTYNKKTSSRRKEYQNGSASAVNGHTNSFSSLEDNVKQRKQRQD.

The next 7 helical transmembrane spans lie at 26–46 (WLLLDNYVPTILFTALYLFIV), 64–84 (ILVVYNLGLTLLSLYMFYELV), 112–132 (VLWWYYFSKLIEFMDTFFFIL), 150–170 (MLNIWWFVMNWVPCGHSYFGA), 175–192 (FIHVLMYSYYGLSAIPAM), 207–223 (LTQFVLTMTQTTCAMIW), and 227–247 (FPMGWLYFQNCYMISLIILFG). The segment at 265–295 (YQNGSASAVNGHTNSFSSLEDNVKQRKQRQD) is disordered. A compositionally biased stretch (polar residues) spans 266–284 (QNGSASAVNGHTNSFSSLE). A compositionally biased stretch (basic and acidic residues) spans 285–295 (DNVKQRKQRQD).

Belongs to the ELO family. ELOVL5 subfamily.

The protein localises to the endoplasmic reticulum membrane. Its subcellular location is the cell projection. It localises to the dendrite. It carries out the reaction a very-long-chain acyl-CoA + malonyl-CoA + H(+) = a very-long-chain 3-oxoacyl-CoA + CO2 + CoA. It catalyses the reaction (6Z,9Z,12Z)-octadecatrienoyl-CoA + malonyl-CoA + H(+) = (8Z,11Z,14Z)-3-oxoeicosatrienoyl-CoA + CO2 + CoA. The enzyme catalyses (9Z,12Z,15Z)-octadecatrienoyl-CoA + malonyl-CoA + H(+) = (11Z,14Z,17Z)-3-oxoeicosatrienoyl-CoA + CO2 + CoA. The catalysed reaction is (9Z)-hexadecenoyl-CoA + malonyl-CoA + H(+) = 3-oxo-(11Z)-octadecenoyl-CoA + CO2 + CoA. It carries out the reaction (9Z)-octadecenoyl-CoA + malonyl-CoA + H(+) = 3-oxo-(11Z)-eicosenoyl-CoA + CO2 + CoA. It catalyses the reaction (11Z)-octadecenoyl-CoA + malonyl-CoA + H(+) = 3-oxo-(13Z)-eicosenoyl-CoA + CO2 + CoA. The enzyme catalyses (9Z,12Z)-octadecadienoyl-CoA + malonyl-CoA + H(+) = (11Z,14Z)-3-oxoicosa-11,14-dienoyl-CoA + CO2 + CoA. The catalysed reaction is (6Z,9Z,12Z,15Z)-octadecatetraenoyl-CoA + malonyl-CoA + H(+) = (8Z,11Z,14Z,17Z)-3-oxoicosatetraenoyl-CoA + CO2 + CoA. It carries out the reaction (5Z,8Z,11Z,14Z)-eicosatetraenoyl-CoA + malonyl-CoA + H(+) = (7Z,10Z,13Z,16Z)-3-oxodocosatetraenoyl-CoA + CO2 + CoA. It catalyses the reaction (5Z,8Z,11Z,14Z,17Z)-eicosapentaenoyl-CoA + malonyl-CoA + H(+) = 3-oxo-(7Z,10Z,13Z,16Z,19Z)-docosapentaenoyl-CoA + CO2 + CoA. Its pathway is lipid metabolism; polyunsaturated fatty acid biosynthesis. In terms of biological role, catalyzes the first and rate-limiting reaction of the four reactions that constitute the long-chain fatty acids elongation cycle. This endoplasmic reticulum-bound enzymatic process allows the addition of 2 carbons to the chain of long- and very long-chain fatty acids (VLCFAs) per cycle. Condensing enzyme that acts specifically toward polyunsaturated acyl-CoA with the higher activity toward C18:3(n-6) acyl-CoA. May participate in the production of monounsaturated and of polyunsaturated VLCFAs of different chain lengths that are involved in multiple biological processes as precursors of membrane lipids and lipid mediators. In conditions where the essential linoleic and alpha linoleic fatty acids are lacking it is also involved in the synthesis of Mead acid from oleic acid. The sequence is that of Very long chain fatty acid elongase 5 from Xenopus tropicalis (Western clawed frog).